We begin with the raw amino-acid sequence, 344 residues long: Palmitoyltransferase ZDHHC4 (344 aa).

The Lumenal portion of the chain corresponds to 1-2 (MD). A helical transmembrane segment spans residues 3–23 (FLVLFLFYLASVLMGLVLICV). The Cytoplasmic portion of the chain corresponds to 24 to 67 (CSKTHSLKGLARGGAQIFSCIIPECLQRAVHGLLHYLFHTRNHT). The chain crosses the membrane as a helical span at residues 68–88 (FIVLHLVLQGMVYTEYTWEVF). At 89–99 (GYCQELELSLH) the chain is on the lumenal side. Residues 100-120 (YLLLPYLLLGVNLFFFTLTCG) traverse the membrane as a helical segment. The Cytoplasmic portion of the chain corresponds to 121-192 (TNPGIITKAN…NNCIGAWNIR (72 aa)). The 51-residue stretch at 149–199 (VRCSTCDLRKPARSKHCSVCNWCVHRFDHHCVWVNNCIGAWNIRYFLIYVL) folds into the DHHC domain. Catalysis depends on Cys179, which acts as the S-palmitoyl cysteine intermediate. The chain crosses the membrane as a helical span at residues 193–213 (YFLIYVLTLTASAATVAIVST). At 214 to 255 (TFLVHLVVMSDLYQETYIDDLGHLHVMDTVFLIQYLFLTFPR) the chain is on the lumenal side. Residues 256–276 (IVFMLGFVVVLSFLLGGYLLF) form a helical membrane-spanning segment. Residues 277–344 (VLYLAATNQT…FPCHERKKQE (68 aa)) are Cytoplasmic-facing. Residues 341–344 (KKQE) carry the Di-lysine motif motif.

The protein belongs to the DHHC palmitoyltransferase family. As to quaternary structure, interacts with CPT1A.

The protein resides in the endoplasmic reticulum membrane. It is found in the golgi apparatus membrane. It localises to the cell membrane. The enzyme catalyses L-cysteinyl-[protein] + hexadecanoyl-CoA = S-hexadecanoyl-L-cysteinyl-[protein] + CoA. Its function is as follows. Palmitoyltransferase that catalyzes the addition of palmitate onto protein substrates including the D(2) dopamine receptor DRD2, GSK3B or MAVS. Mediates GSK3B palmitoylation to prevent its AKT1-mediated phosphorylation leading to activation of the STAT3 signaling pathway. Also catalyzes MAVS palmitoylation which promotes its stabilization and activation by inhibiting 'Lys-48'- but facilitating 'Lys-63'-linked ubiquitination. In Homo sapiens (Human), this protein is Palmitoyltransferase ZDHHC4.